The primary structure comprises 394 residues: MVKKVALAYSGGLDTSVCIPILKEKYGYDEVITISVDVGQPEEEIRKADAKAQKISNKHYTIDAKEEFVRDYIFPLIKANGNYEGYVMGTSVARPLIAKKVVEAAKKEGAIALAHGCTGKGNDQLRFEAVFRQTDMDVIAPMREMNLTREWEINYAKEHGIPVEATKSKPWSVDENIWSRSIEGGRLEDPSFVPPEEIFEWTKSAEDAPNEPRIVDIDFEAGVPVAIDGEKLGGYALVKKMNEIAGENGVGRTDMIEDRVLGLKARENYEHPAATVLLAAHADLEKLVLTRGELKFKKIVEEQWSEMAYAGLVDDPLFADLNAFIDKSQERVTGTVKVKLYKGALTILARSSPNALYSEDLVSFDSQTIDQKDAEGFAKYHGFQARMYRKVVGK.

Ala-8–Ser-16 is a binding site for ATP. L-citrulline-binding residues include Tyr-86 and Ser-91. Residue Gly-116 participates in ATP binding. Positions 118, 122, and 123 each coordinate L-aspartate. An L-citrulline-binding site is contributed by Asn-122. 5 residues coordinate L-citrulline: Arg-126, Ser-172, Ser-181, Glu-257, and Tyr-269.

This sequence belongs to the argininosuccinate synthase family. Type 1 subfamily. Homotetramer.

The protein resides in the cytoplasm. The catalysed reaction is L-citrulline + L-aspartate + ATP = 2-(N(omega)-L-arginino)succinate + AMP + diphosphate + H(+). It participates in amino-acid biosynthesis; L-arginine biosynthesis; L-arginine from L-ornithine and carbamoyl phosphate: step 2/3. The chain is Argininosuccinate synthase from Methanosarcina mazei (strain ATCC BAA-159 / DSM 3647 / Goe1 / Go1 / JCM 11833 / OCM 88) (Methanosarcina frisia).